A 310-amino-acid polypeptide reads, in one-letter code: Apolipoprotein E (310 aa).

An N-terminal signal peptide occupies residues 1 to 18 (MKVLWPALVVTLLAGCRA). 8 repeat units span residues 77–98 (ALMDDTMKEVKACKSELEEQLG), 99–120 (PVAEETKARVSKELQAAQARLG), 121–142 (ADMEEVRNRLAQYRGELQAMVG), 143–164 (QSTEELRGRLNAHLRKLRKRLL), 165–186 (RDAEDLQQRLAVYQAGIREGAE), 187–208 (RSVNTLREHLGPLAEQAATMHT), 209–226 (LVSKPLQERAEAWAQRLR), and 227–248 (GRLEKAGFPVGDRLDEVREQVQ). Residues 77 to 248 (ALMDDTMKEV…RLDEVREQVQ (172 aa)) are 8 X 22 AA approximate tandem repeats. The interval 155-165 (HLRKLRKRLLR) is LDL and other lipoprotein receptors binding. 159-162 (LRKR) serves as a coordination point for heparin. The tract at residues 207-283 (HTLVSKPLQE…SWFEPLVQDM (77 aa)) is lipid-binding and lipoprotein association. 222-229 (AQRLRGRL) contributes to the heparin binding site. A homooligomerization region spans residues 259–310 (NQVRLQAEAFQGRLKSWFEPLVQDMQQKWAELVEKVQLALRAVPTSVPSEKQ). Residues 271-283 (RLKSWFEPLVQDM) form a specificity for association with VLDL region.

Belongs to the apolipoprotein A1/A4/E family. As to quaternary structure, homotetramer. May interact with ABCA1; functionally associated with ABCA1 in the biogenesis of HDLs. May interact with APP/A4 amyloid-beta peptide; the interaction is extremely stable in vitro but its physiological significance is unclear. May interact with MAPT. May interact with MAP2. In the cerebrospinal fluid, interacts with secreted SORL1. Interacts with PMEL; this allows the loading of PMEL luminal fragment on ILVs to induce fibril nucleation. In terms of processing, APOE exists as multiple glycosylated and sialylated glycoforms within cells and in plasma. The extent of glycosylation and sialylation are tissue and context specific. Glycated in plasma VLDL. Post-translationally, phosphorylated by FAM20C in the extracellular medium.

The protein localises to the secreted. The protein resides in the extracellular space. It is found in the extracellular matrix. It localises to the extracellular vesicle. Its subcellular location is the endosome. The protein localises to the multivesicular body. Its function is as follows. APOE is an apolipoprotein, a protein associating with lipid particles, that mainly functions in lipoprotein-mediated lipid transport between organs via the plasma and interstitial fluids. APOE is a core component of plasma lipoproteins and is involved in their production, conversion and clearance. Apolipoproteins are amphipathic molecules that interact both with lipids of the lipoprotein particle core and the aqueous environment of the plasma. As such, APOE associates with chylomicrons, chylomicron remnants, very low density lipoproteins (VLDL) and intermediate density lipoproteins (IDL) but shows a preferential binding to high-density lipoproteins (HDL). It also binds a wide range of cellular receptors including the LDL receptor/LDLR and the very low-density lipoprotein receptor/VLDLR that mediate the cellular uptake of the APOE-containing lipoprotein particles. Finally, APOE also has a heparin-binding activity and binds heparan-sulfate proteoglycans on the surface of cells, a property that supports the capture and the receptor-mediated uptake of APOE-containing lipoproteins by cells. In Dicerorhinus sumatrensis harrissoni (Bornean rhinoceros), this protein is Apolipoprotein E (APOE).